The primary structure comprises 311 residues: Aspartate carbamoyltransferase catalytic subunit (311 aa).

Carbamoyl phosphate-binding residues include Arg-59 and Thr-60. Lys-87 provides a ligand contact to L-aspartate. Positions 109, 139, and 142 each coordinate carbamoyl phosphate. 2 residues coordinate L-aspartate: Arg-172 and Arg-224. Carbamoyl phosphate contacts are provided by Ala-265 and Pro-266.

The protein belongs to the aspartate/ornithine carbamoyltransferase superfamily. ATCase family. As to quaternary structure, heterododecamer (2C3:3R2) of six catalytic PyrB chains organized as two trimers (C3), and six regulatory PyrI chains organized as three dimers (R2).

The catalysed reaction is carbamoyl phosphate + L-aspartate = N-carbamoyl-L-aspartate + phosphate + H(+). It participates in pyrimidine metabolism; UMP biosynthesis via de novo pathway; (S)-dihydroorotate from bicarbonate: step 2/3. In terms of biological role, catalyzes the condensation of carbamoyl phosphate and aspartate to form carbamoyl aspartate and inorganic phosphate, the committed step in the de novo pyrimidine nucleotide biosynthesis pathway. This is Aspartate carbamoyltransferase catalytic subunit from Streptococcus pyogenes serotype M1.